The primary structure comprises 168 residues: MKNTDPVANTKIYLATSFFNEEQRARIPQALAQLEANPTVGVVHQPFDFQYKDARVDSDPAGVFGSLEWQIATYNNDLNAVGTSDVCVALYDMDQIDEGICMEIGMFVALHKPIVLLPFTKKDKSAYEANLMLARGVTTWLEPNDFSPLKDFNFNHPMAQPFPPFKVF.

The active-site Nucleophile is the E103.

The protein belongs to the nucleoside deoxyribosyltransferase family.

It carries out the reaction 2-deoxy-D-ribosyl-base(1) + base(2) = 2-deoxy-D-ribosyl-base(2) + base(1).. The protein operates within nucleotide metabolism; nucleotide salvage pathway. In terms of biological role, catalyzes the cleavage of the glycosidic bond of 2'-deoxyribonucleosides and the transfer of the deoxyribosyl moiety to an acceptor purine or pyrimidine base. The sequence is that of Nucleoside deoxyribosyltransferase (ntd) from Limosilactobacillus fermentum (Lactobacillus fermentum).